Here is a 349-residue protein sequence, read N- to C-terminus: Glycosyltransferase 8 domain-containing protein 2 (349 aa).

Residues 1-6 (MAFLRK) lie on the Cytoplasmic side of the membrane. A helical; Signal-anchor for type II membrane protein membrane pass occupies residues 7–24 (VNQVLLLLLVLTLCGILY). The Lumenal portion of the chain corresponds to 25–349 (KKVHKGAVLK…AGIFKLHHNR (325 aa)). N-linked (GlcNAc...) asparagine glycosylation occurs at asparagine 234.

Belongs to the glycosyltransferase 8 family.

Its subcellular location is the membrane. This chain is Glycosyltransferase 8 domain-containing protein 2 (Glt8d2), found in Mus musculus (Mouse).